Here is a 531-residue protein sequence, read N- to C-terminus: Keratin, type II cytoskeletal 79 (531 aa).

Residues 1 to 12 (MRSSLSRQTFST) show a composition bias toward polar residues. The disordered stretch occupies residues 1–55 (MRSSLSRQTFSTKGGFSSNSASGGGGSRMRTSYSSVTMSRGSGGGGGVRSGSSSG). The segment at 1 to 138 (MRSSLSRQTF…DPEIQRVRTQ (138 aa)) is head. Residues 28 to 40 (RMRTSYSSVTMSR) are compositionally biased toward low complexity. Positions 41-55 (GSGGGGGVRSGSSSG) are enriched in gly residues. Residues 139–174 (EREQIKTLNNKFASFIDKVRFLEQQNKVLETKWALL) form a coil 1A region. The 315-residue stretch at 139-453 (EREQIKTLNN…KLLESEESRM (315 aa)) folds into the IF rod domain. A linker 1 region spans residues 175–194 (QEQSQNTGVARSLEPFFENY). The interval 195-286 (LSTLRRQLDT…QLFEMELSQV (92 aa)) is coil 1B. The linker 12 stretch occupies residues 287–310 (QTNVSDTNVILSMDNNRNLDLDSI). The tract at residues 311–449 (IAEVKAQYEL…ATYRKLLESE (139 aa)) is coil 2. The tract at residues 450–531 (ESRMSGDCPS…TTVKTSSRRY (82 aa)) is tail.

The protein belongs to the intermediate filament family. Heterotetramer of two type I and two type II keratins.

The chain is Keratin, type II cytoskeletal 79 (Krt79) from Mus musculus (Mouse).